The chain runs to 264 residues: Probable metallo-hydrolase YflN (264 aa).

Zn(2+)-binding residues include histidine 80, histidine 82, aspartate 84, histidine 85, histidine 169, aspartate 188, and histidine 241.

The protein belongs to the metallo-beta-lactamase superfamily. Zn(2+) serves as cofactor.

In Bacillus subtilis (strain 168), this protein is Probable metallo-hydrolase YflN (yflN).